A 209-amino-acid chain; its full sequence is E3 ubiquitin-protein ligase RNF138 (209 aa).

Residues 18 to 58 (CPVCQEVLKTPVRTAACQHVFCRKCFLTAMRESGIHCPLCR) form an RING-type zinc finger. Residues C86, C89, H101, and C105 each contribute to the Zn(2+) site. The segment at 86-105 (CRCCSKKIKFYRMRHHYKSC) adopts a C2HC RNF-type zinc-finger fold. Positions 125–154 (QDSVRSSNRSETSASDNTETYQEDTSSSGH) are disordered. Phosphothreonine is present on T142. The C2H2-type zinc finger occupies 157–180 (FKCPLCQESNFTRQRLLDHCNSNH). Residues 189-207 (LQLDEETQYQTAVEESFQV) form the UIM domain.

As to quaternary structure, interacts with NLK. Interacts with XRCC5/Ku80. Interacts with RBBP8/CtIP. Post-translationally, auto-ubiquitinated.

It localises to the chromosome. It carries out the reaction S-ubiquitinyl-[E2 ubiquitin-conjugating enzyme]-L-cysteine + [acceptor protein]-L-lysine = [E2 ubiquitin-conjugating enzyme]-L-cysteine + N(6)-ubiquitinyl-[acceptor protein]-L-lysine.. It participates in protein modification; protein ubiquitination. E3 ubiquitin-protein ligase involved in DNA damage response by promoting DNA resection and homologous recombination. Recruited to sites of double-strand breaks following DNA damage and specifically promotes double-strand break repair via homologous recombination. Two different, non-exclusive, mechanisms have been proposed. According to a report, regulates the choice of double-strand break repair by favoring homologous recombination over non-homologous end joining (NHEJ): acts by mediating ubiquitination of XRCC5/Ku80, leading to remove the Ku complex from DNA breaks, thereby promoting homologous recombination. According to another report, cooperates with UBE2Ds E2 ubiquitin ligases (UBE2D1, UBE2D2, UBE2D3 or UBE2D4) to promote homologous recombination by mediating ubiquitination of RBBP8/CtIP. Together with NLK, involved in the ubiquitination and degradation of TCF/LEF. Also exhibits auto-ubiquitination activity in combination with UBE2K. May act as a negative regulator in the Wnt/beta-catenin-mediated signaling pathway. The chain is E3 ubiquitin-protein ligase RNF138 from Rattus norvegicus (Rat).